The chain runs to 278 residues: Large ribosomal subunit protein uL2 (278 aa).

Disordered stretches follow at residues 1-58 (MAIR…GGGH) and 224-278 (VVMN…GKKR). The segment covering 23 to 33 (EITRDHPEKSL) has biased composition (basic and acidic residues). Residues 37–58 (LHGRGGRNAHGRITTRHKGGGH) are compositionally biased toward basic residues. A compositionally biased stretch (basic and acidic residues) spans 253-268 (PEGRTRKPKKASDKLI). A compositionally biased stretch (basic residues) spans 269–278 (VRRRRTGKKR).

This sequence belongs to the universal ribosomal protein uL2 family. Part of the 50S ribosomal subunit. Forms a bridge to the 30S subunit in the 70S ribosome.

One of the primary rRNA binding proteins. Required for association of the 30S and 50S subunits to form the 70S ribosome, for tRNA binding and peptide bond formation. It has been suggested to have peptidyltransferase activity; this is somewhat controversial. Makes several contacts with the 16S rRNA in the 70S ribosome. The protein is Large ribosomal subunit protein uL2 of Mycolicibacterium vanbaalenii (strain DSM 7251 / JCM 13017 / BCRC 16820 / KCTC 9966 / NRRL B-24157 / PYR-1) (Mycobacterium vanbaalenii).